Reading from the N-terminus, the 72-residue chain is uncharacterized protein (72 aa).

This is an uncharacterized protein from Haemophilus influenzae (strain ATCC 51907 / DSM 11121 / KW20 / Rd).